Here is a 388-residue protein sequence, read N- to C-terminus: Protochlorophyllide reductase A, chloroplastic (388 aa).

A chloroplast-targeting transit peptide spans 1-74 (MALQLLPSTL…SPSGKKTLRQ (74 aa)). Low complexity predominate over residues 48-68 (VATAPSPVTTSPGSTASSPSG). Positions 48 to 69 (VATAPSPVTTSPGSTASSPSGK) are disordered.

It belongs to the short-chain dehydrogenases/reductases (SDR) family. POR subfamily.

The protein localises to the plastid. It is found in the chloroplast. It catalyses the reaction chlorophyllide a + NADP(+) = protochlorophyllide a + NADPH + H(+). The protein operates within porphyrin-containing compound metabolism; chlorophyll biosynthesis. Phototransformation of protochlorophyllide (Pchlide) to chlorophyllide (Chlide). The protein is Protochlorophyllide reductase A, chloroplastic (PORA) of Hordeum vulgare (Barley).